The primary structure comprises 482 residues: Nicotine dehydrogenase (482 aa).

Residues 1–38 (MSDKTKTNEGFSRRSFIGSAAVVTAGVAGLGAIDAASA) constitute a signal peptide (tat-type signal). FAD contacts are provided by A64, E83, A84, R85, R91, W108, and V279. (S)-nicotine is bound at residue T381. The FAD site is built by A453, N462, and I463.

The protein belongs to the flavin monoamine oxidase family. Monomer in solution. Homodimer in solution. Forms homodimers in the crystal. It depends on FAD as a cofactor. Post-translationally, predicted to be exported by the Tat system. The position of the signal peptide cleavage has not been experimentally proven.

It is found in the periplasm. The catalysed reaction is (S)-nicotine + 2 Fe(III)-[cytochrome c] = N-methylmyosmine + 2 Fe(II)-[cytochrome c] + 2 H(+). It participates in alkaloid degradation; nicotine degradation. With respect to regulation, the catalytic rate is not significantly affected by pH. In terms of biological role, involved in nicotine degradation. Catalyzes the conversion of nicotine to N-methylmyosmine. N-methylmyosmine undergoes spontaneous hydrolysis to form pseudooxynicotine (PN). S-nicotine is the optimal substrate. Has lower activity with some nicotine analogs, but shows no activity towards neurotransmitters, including serotonin, dopamine, and norepinephrine, nicotine metabolites and common neuroactive drugs. The enzyme is stereospecific with poor activity with (R)-nicotine as the substrate. The c-type cytochrome protein CycN is the physiological electron acceptor. O(2) is a poor electron acceptor. This is Nicotine dehydrogenase from Pseudomonas putida (strain DSM 28022 / S16).